The chain runs to 611 residues: Dihydroxy-acid dehydratase (611 aa).

Aspartate 81 is a binding site for Mg(2+). Cysteine 122 provides a ligand contact to [2Fe-2S] cluster. Aspartate 123 and lysine 124 together coordinate Mg(2+). Lysine 124 carries the post-translational modification N6-carboxylysine. Residue cysteine 195 participates in [2Fe-2S] cluster binding. Mg(2+) is bound at residue glutamate 491. The active-site Proton acceptor is the serine 517.

Belongs to the IlvD/Edd family. Homodimer. The cofactor is [2Fe-2S] cluster. It depends on Mg(2+) as a cofactor.

It catalyses the reaction (2R)-2,3-dihydroxy-3-methylbutanoate = 3-methyl-2-oxobutanoate + H2O. It carries out the reaction (2R,3R)-2,3-dihydroxy-3-methylpentanoate = (S)-3-methyl-2-oxopentanoate + H2O. Its pathway is amino-acid biosynthesis; L-isoleucine biosynthesis; L-isoleucine from 2-oxobutanoate: step 3/4. It functions in the pathway amino-acid biosynthesis; L-valine biosynthesis; L-valine from pyruvate: step 3/4. Functionally, functions in the biosynthesis of branched-chain amino acids. Catalyzes the dehydration of (2R,3R)-2,3-dihydroxy-3-methylpentanoate (2,3-dihydroxy-3-methylvalerate) into 2-oxo-3-methylpentanoate (2-oxo-3-methylvalerate) and of (2R)-2,3-dihydroxy-3-methylbutanoate (2,3-dihydroxyisovalerate) into 2-oxo-3-methylbutanoate (2-oxoisovalerate), the penultimate precursor to L-isoleucine and L-valine, respectively. This Brucella canis (strain ATCC 23365 / NCTC 10854 / RM-666) protein is Dihydroxy-acid dehydratase.